Here is a 246-residue protein sequence, read N- to C-terminus: Zinc import ATP-binding protein ZnuC (246 aa).

In terms of domain architecture, ABC transporter spans 24–244; that stretch reads LKIENLALAY…TLGEIFSSYI (221 aa). 56–63 is an ATP binding site; sequence GPNGGGKT.

It belongs to the ABC transporter superfamily. Zinc importer (TC 3.A.1.15.5) family. In terms of assembly, the complex is composed of two ATP-binding proteins (ZnuC), two transmembrane proteins (ZnuB) and a solute-binding protein (ZnuA).

Its subcellular location is the cell membrane. The enzyme catalyses Zn(2+)(out) + ATP(in) + H2O(in) = Zn(2+)(in) + ADP(in) + phosphate(in) + H(+)(in). In terms of biological role, part of the ABC transporter complex ZnuABC involved in zinc import. Responsible for energy coupling to the transport system. This is Zinc import ATP-binding protein ZnuC from Wolbachia sp. subsp. Brugia malayi (strain TRS).